Reading from the N-terminus, the 1099-residue chain is Glutamine--fructose-6-phosphate aminotransferase [isomerizing] (1099 aa).

The active-site Nucleophile; for GATase activity is cysteine 2. The region spanning 2–71 is the Glutamine amidotransferase type-2; first part domain; the sequence is CGIIGYIGND…DIDGNIGIGH (70 aa). Residues 198–253 form the HTH cro/C1-type domain; it reads LRKVREKLGLTRKDVEKLCGVKEIYIVKIETGKLESIEEERLKKLCSLYGINFEEI. The DOD-type homing endonuclease domain occupies 278 to 413; the sequence is IIGYIIGDGH…IQFLLLRFGI (136 aa). Residues 571-723 enclose the Glutamine amidotransferase type-2; second part domain; that stretch reads SRWATHGNVC…DGDVVVIKKK (153 aa). SIS domains follow at residues 786 to 923 and 948 to 1089; these read LAKC…LLGR and TIKE…VDKP. Residue lysine 1094 is the For Fru-6P isomerization activity of the active site.

In the C-terminal section; belongs to the SIS family. GFAT subfamily. Homodimer. Post-translationally, this protein undergoes a protein self splicing that involves a post-translational excision of the intervening region (intein) followed by peptide ligation.

The protein localises to the cytoplasm. It carries out the reaction D-fructose 6-phosphate + L-glutamine = D-glucosamine 6-phosphate + L-glutamate. Functionally, catalyzes the first step in hexosamine metabolism, converting fructose-6P into glucosamine-6P using glutamine as a nitrogen source. This is Glutamine--fructose-6-phosphate aminotransferase [isomerizing] (glmS) from Methanocaldococcus jannaschii (strain ATCC 43067 / DSM 2661 / JAL-1 / JCM 10045 / NBRC 100440) (Methanococcus jannaschii).